Reading from the N-terminus, the 113-residue chain is Histone H3-8 (113 aa).

Residues 1–17 (NTGAKAPRKHLANKAAR) are compositionally biased toward basic residues. Residues 1–31 (NTGAKAPRKHLANKAARKTAAPANAGIKKPH) form a disordered region.

Belongs to the histone H3 family. In terms of assembly, the nucleosome is a histone octamer containing two molecules each of H2A, H2B, H3 and H4 assembled in one H3-H4 heterotetramer and two H2A-H2B heterodimers. The octamer wraps approximately 147 bp of DNA.

The protein resides in the nucleus. It localises to the chromosome. In terms of biological role, core component of nucleosome. Nucleosomes wrap and compact DNA into chromatin, limiting DNA accessibility to the cellular machineries which require DNA as a template. Histones thereby play a central role in transcription regulation, DNA repair, DNA replication and chromosomal stability. DNA accessibility is regulated via a complex set of post-translational modifications of histones, also called histone code, and nucleosome remodeling. The protein is Histone H3-8 (H3-8) of Stylonychia lemnae (Ciliate).